The following is a 390-amino-acid chain: Elongation factor Tu 1 (390 aa).

The tr-type G domain occupies 10-201; the sequence is KPHVNVGTIG…LDEYVAVPPR (192 aa). The G1 stretch occupies residues 19-26; the sequence is GHVDHGKT. 19-26 lines the GTP pocket; it reads GHVDHGKT. Threonine 26 contacts Mg(2+). Residues 55–59 are G2; sequence GITIA. Residues 76 to 79 are G3; sequence DCPG. GTP contacts are provided by residues 76–80 and 131–134; these read DCPGH and NKAD. The interval 131-134 is G4; that stretch reads NKAD. The segment at 168 to 170 is G5; sequence SAL.

The protein belongs to the TRAFAC class translation factor GTPase superfamily. Classic translation factor GTPase family. EF-Tu/EF-1A subfamily. In terms of assembly, monomer.

The protein localises to the cytoplasm. The enzyme catalyses GTP + H2O = GDP + phosphate + H(+). In terms of biological role, GTP hydrolase that promotes the GTP-dependent binding of aminoacyl-tRNA to the A-site of ribosomes during protein biosynthesis. The chain is Elongation factor Tu 1 from Wolbachia pipientis wMel.